We begin with the raw amino-acid sequence, 360 residues long: Pyrimidine monooxygenase RutA (360 aa).

FMN is bound by residues 49–50 (IK), Asn-115, Glu-124, 140–141 (RY), and Ser-190.

The protein belongs to the NtaA/SnaA/DszA monooxygenase family. RutA subfamily.

It catalyses the reaction uracil + FMNH2 + NADH + O2 = (Z)-3-ureidoacrylate + FMN + NAD(+) + H2O + H(+). It carries out the reaction thymine + FMNH2 + NADH + O2 = (Z)-2-methylureidoacrylate + FMN + NAD(+) + H2O + H(+). Catalyzes the pyrimidine ring opening between N-3 and C-4 by an unusual flavin hydroperoxide-catalyzed mechanism, adding oxygen atoms in the process to yield ureidoacrylate peracid, that immediately reacts with FMN forming ureidoacrylate and FMN-N(5)-oxide. The FMN-N(5)-oxide reacts spontaneously with NADH to produce FMN. Requires the flavin reductase RutF to regenerate FMN in vivo. The sequence is that of Pyrimidine monooxygenase RutA from Pseudomonas savastanoi pv. phaseolicola (strain 1448A / Race 6) (Pseudomonas syringae pv. phaseolicola (strain 1448A / Race 6)).